The chain runs to 214 residues: MQRILDLRRIYALTVDPRALHGSVWKVDFKVVRQELIRYIKDLALFEGEFILSSGQKSSYYIDLRRVSLDCRAAPIIGKVMFDLICDLQDVDAIGGLTMGADPIACAIMHYAASVGRSYNAFVVRKQKKTHGLARLIEGPDIRGKRVVIVEDTSTTGNSPITAARRAEETGATVAAIAVMVDRETGARQAIEKAGYSYYAALRVTDILDRGTAD.

5-phospho-alpha-D-ribose 1-diphosphate contacts are provided by residues Arg-125, Lys-126, Lys-129, His-131, and 151–159 (EDTSTTGNS). 2 residues coordinate orotate: Thr-155 and Arg-183.

It belongs to the purine/pyrimidine phosphoribosyltransferase family. PyrE subfamily. In terms of assembly, homodimer. Mg(2+) serves as cofactor.

It carries out the reaction orotidine 5'-phosphate + diphosphate = orotate + 5-phospho-alpha-D-ribose 1-diphosphate. Its pathway is pyrimidine metabolism; UMP biosynthesis via de novo pathway; UMP from orotate: step 1/2. In terms of biological role, catalyzes the transfer of a ribosyl phosphate group from 5-phosphoribose 1-diphosphate to orotate, leading to the formation of orotidine monophosphate (OMP). The chain is Orotate phosphoribosyltransferase from Tropheryma whipplei (strain TW08/27) (Whipple's bacillus).